The chain runs to 275 residues: Phosphatidylglycerol--prolipoprotein diacylglyceryl transferase (275 aa).

The next 4 membrane-spanning stretches (helical) occupy residues Phe20–Ala40, Leu58–Trp78, Ile88–Val108, and Leu118–Gly138. Arg139 is an a 1,2-diacyl-sn-glycero-3-phospho-(1'-sn-glycerol) binding site. Transmembrane regions (helical) follow at residues Gly209 to Met229 and Ile239 to Ile259.

It belongs to the Lgt family.

It localises to the cell membrane. The enzyme catalyses L-cysteinyl-[prolipoprotein] + a 1,2-diacyl-sn-glycero-3-phospho-(1'-sn-glycerol) = an S-1,2-diacyl-sn-glyceryl-L-cysteinyl-[prolipoprotein] + sn-glycerol 1-phosphate + H(+). Its pathway is protein modification; lipoprotein biosynthesis (diacylglyceryl transfer). In terms of biological role, catalyzes the transfer of the diacylglyceryl group from phosphatidylglycerol to the sulfhydryl group of the N-terminal cysteine of a prolipoprotein, the first step in the formation of mature lipoproteins. The polypeptide is Phosphatidylglycerol--prolipoprotein diacylglyceryl transferase (Limosilactobacillus reuteri (strain DSM 20016) (Lactobacillus reuteri)).